The following is a 546-amino-acid chain: Chaperonin GroEL 6 (546 aa).

Residues 30–33, K51, 87–91, G415, and D496 contribute to the ATP site; these read TLGP and DGTTT.

The protein belongs to the chaperonin (HSP60) family. As to quaternary structure, forms a cylinder of 14 subunits composed of two heptameric rings stacked back-to-back. Interacts with the co-chaperonin GroES.

It is found in the cytoplasm. It catalyses the reaction ATP + H2O + a folded polypeptide = ADP + phosphate + an unfolded polypeptide.. Together with its co-chaperonin GroES, plays an essential role in assisting protein folding. The GroEL-GroES system forms a nano-cage that allows encapsulation of the non-native substrate proteins and provides a physical environment optimized to promote and accelerate protein folding. This chain is Chaperonin GroEL 6, found in Bradyrhizobium diazoefficiens (strain JCM 10833 / BCRC 13528 / IAM 13628 / NBRC 14792 / USDA 110).